The sequence spans 334 residues: MIVIPRYTIIKEKASIRIPEILDNLNLKNPLVITGKNTQKYNKDFDFIYYDEIETSDLENLKNYTKDYDSVIGIGGGRPIDIGKLIAHKSKKPFLSVPTTASNDGIASPIVSLTQPSYMTEAPIAIIADTEIIKKSPKKLLSAGMGDIVSNITAVLDWELGKIEKLEKYSDSSGIFSKTIAIELMDYVLNSDLEEYPKKLVKALIGSGISIAIAHSSRPASGSEHLFSHALDNMKEKYGIDTNSLHGEQCGVGTLAIAQIYLEEGKIEVETVEMIKNSLKAVDAPVTAKQLGFDEEILSEALSSAHSLRNRHTILRNGLSKEKAREILEKSEII.

NAD(+) is bound by residues 77 to 81 (GRPID) and 99 to 102 (TTAS). Aspartate 104 lines the substrate pocket. Position 108 (serine 108) interacts with NAD(+). Residue aspartate 147 coordinates substrate. The Zn(2+) site is built by aspartate 147 and histidine 225. Substrate is bound at residue histidine 229. Histidine 246 is a binding site for Zn(2+).

It belongs to the glycerol-1-phosphate dehydrogenase family. The cofactor is Zn(2+).

It is found in the cytoplasm. It catalyses the reaction sn-glycerol 1-phosphate + NAD(+) = dihydroxyacetone phosphate + NADH + H(+). The enzyme catalyses sn-glycerol 1-phosphate + NADP(+) = dihydroxyacetone phosphate + NADPH + H(+). It functions in the pathway membrane lipid metabolism; glycerophospholipid metabolism. In terms of biological role, catalyzes the NAD(P)H-dependent reduction of dihydroxyacetonephosphate (DHAP or glycerone phosphate) to glycerol 1-phosphate (G1P). The G1P thus generated is used as the glycerophosphate backbone of phospholipids in the cellular membranes of Archaea. The protein is Glycerol-1-phosphate dehydrogenase [NAD(P)+] of Methanococcus maripaludis (strain C7 / ATCC BAA-1331).